The sequence spans 246 residues: Ribonuclease 3 (246 aa).

The 130-residue stretch at 8–137 (ANRLKTRLGF…LLGAIYLDQG (130 aa)) folds into the RNase III domain. Glutamate 50 is a binding site for Mg(2+). Aspartate 54 is an active-site residue. Mg(2+)-binding residues include aspartate 123 and glutamate 126. Glutamate 126 is an active-site residue. A DRBM domain is found at 164-233 (DYKTELQEIL…AKDAFQHLEG (70 aa)). The disordered stretch occupies residues 212-246 (SGHSKKEAEQQAAKDAFQHLEGMGKSGHKSAGPIR).

The protein belongs to the ribonuclease III family. Homodimer. It depends on Mg(2+) as a cofactor.

The protein resides in the cytoplasm. The enzyme catalyses Endonucleolytic cleavage to 5'-phosphomonoester.. Functionally, digests double-stranded RNA. Involved in the processing of primary rRNA transcript to yield the immediate precursors to the large and small rRNAs (23S and 16S). Processes some mRNAs, and tRNAs when they are encoded in the rRNA operon. Processes pre-crRNA and tracrRNA of type II CRISPR loci if present in the organism. This Desulforamulus reducens (strain ATCC BAA-1160 / DSM 100696 / MI-1) (Desulfotomaculum reducens) protein is Ribonuclease 3.